The primary structure comprises 297 residues: Glycine--tRNA ligase alpha subunit (297 aa).

It belongs to the class-II aminoacyl-tRNA synthetase family. Tetramer of two alpha and two beta subunits.

It localises to the cytoplasm. It catalyses the reaction tRNA(Gly) + glycine + ATP = glycyl-tRNA(Gly) + AMP + diphosphate. This chain is Glycine--tRNA ligase alpha subunit, found in Sulfurihydrogenibium sp. (strain YO3AOP1).